The following is a 406-amino-acid chain: E3 ubiquitin-protein ligase RING1 (406 aa).

Phosphothreonine is present on Thr-24. A necessary for transcriptional repression region spans residues 30–234; it reads MDGTEIAVSP…GGAGSEDSGD (205 aa). Ser-38 is modified (phosphoserine). The RING-type zinc finger occupies 48 to 88; sequence CPICLDMLKNTMTTKECLHRFCSDCIVTALRSGNKECPTCR. Residues Ser-140, Ser-187, and Ser-190 each carry the phosphoserine modification. Disordered regions lie at residues 151 to 263 and 309 to 354; these read HRAQ…GEIE and QQQE…PSLE. The span at 175-187 shows a compositional bias: acidic residues; sequence EPGEGEGDGEDVS. Residues 201–204 carry the Nuclear localization signal motif; the sequence is KRPR. The span at 214-228 shows a compositional bias: gly residues; sequence GTGGGAAGGACGGAG. Thr-215 is modified (phosphothreonine). Phosphoserine is present on residues Ser-229 and Ser-232. Residues 230 to 406 are necessary for interaction with CBX2; sequence EDSGDRGGTL…LCYAPTKDPK (177 aa). A compositionally biased stretch (gly residues) spans 235-244; sequence RGGTLGGGTL. Residues 246 to 258 show a composition bias toward pro residues; that stretch reads PPSPPGAPSPPEP. A phosphoserine mark is found at Ser-248 and Ser-254. Positions 317-343 are enriched in gly residues; it reads GGPGGGASDTGGPDGGGGERGVAGGGE.

In terms of assembly, component of chromatin-associated Polycomb (PcG) complexes. Part of the E2F6.com-1 complex in G0 phase composed of E2F6, MGA, MAX, TFDP1, CBX3, BAT8, EUHMTASE1, RING1, RNF2/RING2 MBLR, L3MBTL2 and YAF2. Interacts with CBX2 and PCGF6. Component of a PRC1-like complex. Component of repressive BCOR complex containing Polycomb group subcomplex at least composed of RYBP, PCGF1, BCOR and RNF2/RING2. Interacts with PHC2, PCGF2, RNF2; CBX6, CBX7 and CBX8. Interacts with BMI1. Interacts with MN1. Interacts with USP26.

It localises to the nucleus speckle. The catalysed reaction is S-ubiquitinyl-[E2 ubiquitin-conjugating enzyme]-L-cysteine + [acceptor protein]-L-lysine = [E2 ubiquitin-conjugating enzyme]-L-cysteine + N(6)-ubiquitinyl-[acceptor protein]-L-lysine.. It participates in protein modification; protein ubiquitination. Functionally, constitutes one of the E3 ubiquitin-protein ligases that mediate monoubiquitination of 'Lys-119' of histone H2A, thereby playing a central role in histone code and gene regulation. H2A 'Lys-119' ubiquitination gives a specific tag for epigenetic transcriptional repression and participates in X chromosome inactivation of female mammals. Essential component of a Polycomb group (PcG) multiprotein PRC1-like complex, a complex class required to maintain the transcriptionally repressive state of many genes, including Hox genes, throughout development. PcG PRC1 complex acts via chromatin remodeling and modification of histones, rendering chromatin heritably changed in its expressibility. Compared to RNF2/RING2, it does not have the main E3 ubiquitin ligase activity on histone H2A, and it may rather act as a modulator of RNF2/RING2 activity. The chain is E3 ubiquitin-protein ligase RING1 from Mus musculus (Mouse).